A 217-amino-acid polypeptide reads, in one-letter code: Peptide methionine sulfoxide reductase MsrA 1 (217 aa).

Cys57 is a catalytic residue.

This sequence belongs to the MsrA Met sulfoxide reductase family.

The catalysed reaction is L-methionyl-[protein] + [thioredoxin]-disulfide + H2O = L-methionyl-(S)-S-oxide-[protein] + [thioredoxin]-dithiol. The enzyme catalyses [thioredoxin]-disulfide + L-methionine + H2O = L-methionine (S)-S-oxide + [thioredoxin]-dithiol. In terms of biological role, has an important function as a repair enzyme for proteins that have been inactivated by oxidation. Catalyzes the reversible oxidation-reduction of methionine sulfoxide in proteins to methionine. This chain is Peptide methionine sulfoxide reductase MsrA 1 (msrA1), found in Rhizobium meliloti (strain 1021) (Ensifer meliloti).